We begin with the raw amino-acid sequence, 226 residues long: N-(5'-phosphoribosyl)anthranilate isomerase (226 aa).

It belongs to the TrpF family.

The catalysed reaction is N-(5-phospho-beta-D-ribosyl)anthranilate = 1-(2-carboxyphenylamino)-1-deoxy-D-ribulose 5-phosphate. It participates in amino-acid biosynthesis; L-tryptophan biosynthesis; L-tryptophan from chorismate: step 3/5. The chain is N-(5'-phosphoribosyl)anthranilate isomerase from Synechococcus sp. (strain JA-3-3Ab) (Cyanobacteria bacterium Yellowstone A-Prime).